Reading from the N-terminus, the 336-residue chain is Foldase protein PrsA (336 aa).

Residues 1–22 form the signal peptide; it reads MKSAKKLLSVLCLGIFILTFTA. A lipid anchor (N-palmitoyl cysteine) is attached at Cys-23. The S-diacylglycerol cysteine moiety is linked to residue Cys-23. Residues 194–286 form the PpiC domain; the sequence is PNTMNVSHIL…FGYHIIKINS (93 aa).

This sequence belongs to the PrsA family.

Its subcellular location is the cell membrane. It carries out the reaction [protein]-peptidylproline (omega=180) = [protein]-peptidylproline (omega=0). Functionally, plays a major role in protein secretion by helping the post-translocational extracellular folding of several secreted proteins. The protein is Foldase protein PrsA of Clostridium botulinum (strain 657 / Type Ba4).